A 255-amino-acid chain; its full sequence is Type III pantothenate kinase (255 aa).

6–13 (DIGNTTSE) provides a ligand contact to ATP. Residues Tyr-100 and 107-110 (GIDR) contribute to the substrate site. Asp-109 (proton acceptor) is an active-site residue. Asp-129 is a K(+) binding site. Thr-132 provides a ligand contact to ATP. Thr-184 is a binding site for substrate.

The protein belongs to the type III pantothenate kinase family. Homodimer. It depends on NH4(+) as a cofactor. K(+) is required as a cofactor.

The protein resides in the cytoplasm. The catalysed reaction is (R)-pantothenate + ATP = (R)-4'-phosphopantothenate + ADP + H(+). It functions in the pathway cofactor biosynthesis; coenzyme A biosynthesis; CoA from (R)-pantothenate: step 1/5. In terms of biological role, catalyzes the phosphorylation of pantothenate (Pan), the first step in CoA biosynthesis. The sequence is that of Type III pantothenate kinase from Persephonella marina (strain DSM 14350 / EX-H1).